Reading from the N-terminus, the 623-residue chain is (-)-alpha-pinene synthase 1, chloroplastic (623 aa).

A chloroplast-targeting transit peptide spans 1 to 52 (MDLISVLPSASKSCVCLHKPLSSSTHKLKPFCKTIRILGMPRRWKFAGPSMS). Mg(2+) is bound by residues Asp374, Asp378, and Asp526. The short motif at 374-378 (DDMYD) is the DDXXD motif element.

This sequence belongs to the terpene synthase family. Tpsd subfamily. Mg(2+) is required as a cofactor. Requires Mn(2+) as cofactor.

It is found in the plastid. Its subcellular location is the chloroplast. The enzyme catalyses (2E)-geranyl diphosphate = (1S,5S)-alpha-pinene + diphosphate. It catalyses the reaction (2E)-geranyl diphosphate = (1S,5S)-beta-pinene + diphosphate. It carries out the reaction (2E)-geranyl diphosphate = (-)-beta-phellandrene + diphosphate. Its pathway is terpene metabolism; oleoresin biosynthesis. The protein operates within secondary metabolite biosynthesis; terpenoid biosynthesis. Functionally, monoterpene synthase (TPS) involved in the biosynthesis of monoterpene natural products included in conifer oleoresin secretions and volatile emissions; these compounds contribute to biotic and abiotic stress defense against herbivores and pathogens. Catalyzes the conversion of (2E)-geranyl diphosphate (GPP) to (-)-alpha-pinene and (-)-beta-pinene, and, to a lower extent, to (-)-beta-phellandrene. This Pinus banksiana (Jack pine) protein is (-)-alpha-pinene synthase 1, chloroplastic.